Here is a 156-residue protein sequence, read N- to C-terminus: V-type sodium ATPase subunit K (156 aa).

The next 4 helical transmembrane spans lie at 11–31, 60–80, 89–109, and 132–152; these read GMVF…IGSA, LLPG…FINL, GLNF…SGIA, and IIFA…SFLL.

It belongs to the V-ATPase proteolipid subunit family. Post-translationally, the N-terminus is blocked.

It localises to the cell membrane. In terms of biological role, involved in ATP-driven sodium extrusion. The polypeptide is V-type sodium ATPase subunit K (ntpK) (Enterococcus hirae (strain ATCC 9790 / DSM 20160 / JCM 8729 / LMG 6399 / NBRC 3181 / NCIMB 6459 / NCDO 1258 / NCTC 12367 / WDCM 00089 / R)).